The sequence spans 508 residues: Photosystem II CP47 reaction center protein (508 aa).

Helical transmembrane passes span 21-36 (AVHL…WAGS), 101-115 (IVLS…IWHW), 140-156 (GIHL…FGAF), 203-218 (IAAG…FHLC), 237-252 (VLSS…AFVV), and 457-472 (CFAL…HGAR).

Belongs to the PsbB/PsbC family. PsbB subfamily. In terms of assembly, PSII is composed of 1 copy each of membrane proteins PsbA, PsbB, PsbC, PsbD, PsbE, PsbF, PsbH, PsbI, PsbJ, PsbK, PsbL, PsbM, PsbT, PsbX, PsbY, PsbZ, Psb30/Ycf12, at least 3 peripheral proteins of the oxygen-evolving complex and a large number of cofactors. It forms dimeric complexes. The cofactor is Binds multiple chlorophylls. PSII binds additional chlorophylls, carotenoids and specific lipids..

It is found in the plastid. The protein resides in the chloroplast thylakoid membrane. In terms of biological role, one of the components of the core complex of photosystem II (PSII). It binds chlorophyll and helps catalyze the primary light-induced photochemical processes of PSII. PSII is a light-driven water:plastoquinone oxidoreductase, using light energy to abstract electrons from H(2)O, generating O(2) and a proton gradient subsequently used for ATP formation. The polypeptide is Photosystem II CP47 reaction center protein (Chlorella vulgaris (Green alga)).